Here is a 316-residue protein sequence, read N- to C-terminus: tRNA dimethylallyltransferase (316 aa).

17-24 (GPTASGKT) is an ATP binding site. 19-24 (TASGKT) contacts substrate. Interaction with substrate tRNA stretches follow at residues 42-45 (DSAL), 166-170 (QRLSR), 247-252 (RCVGYR), and 280-287 (KRQITWLR).

It belongs to the IPP transferase family. Monomer. Mg(2+) is required as a cofactor.

The catalysed reaction is adenosine(37) in tRNA + dimethylallyl diphosphate = N(6)-dimethylallyladenosine(37) in tRNA + diphosphate. Functionally, catalyzes the transfer of a dimethylallyl group onto the adenine at position 37 in tRNAs that read codons beginning with uridine, leading to the formation of N6-(dimethylallyl)adenosine (i(6)A). In Escherichia coli O127:H6 (strain E2348/69 / EPEC), this protein is tRNA dimethylallyltransferase.